The chain runs to 899 residues: Periodic tryptophan protein 2 homolog (899 aa).

WD repeat units lie at residues 9–52, 53–92, 94–132, 149–188, 193–232, 252–291, 294–334, 337–376, 379–418, 422–464, 465–504, 507–546, and 569–608; these read NLLG…TLPF, SHRKNIARIGLTPQGNLLLSIDEDGQAILTNVPRRVVLYH, SFKAPVTALSFSPSGRHFIVGLGRKIEVWHVPSTPDANA, QHFDDVRHIEWSHDSRFFLTSSKDLTARIWSVDQEEGFTP, GHRQGVVGAWFSKDQETIYTVSKDGAVFDWQYVAKPGQDE, QNSATVRCAAFHPESNLLVAGFSNGIFGLYEMPDFNMIHT, ISQN…YILK, GHFDSMNSLVYSPDGQRIVTVADDGKIKVWDTESGFCIVT, EHTSGITACEFSKKGNVLFTSSLDGSIRAWDLIRYRNFRT, PERL…DRLS, GHEGPVSSLAFAPNGGLLVSGSWDRTARIWSIFNRTQTSE, QLNSDVLDIAFRPDSLQIAISTLDGNLSFWSVSEAEQQAG, and AGTKAFNTIRYSTDGSCLLAGGNSKYICLYSVTTMVLLKK. Positions 639 to 668 are disordered; the sequence is DEQGEASDFEDRIDRSLPGSKRGDPSARRK. Residues 647–668 are compositionally biased toward basic and acidic residues; it reads FEDRIDRSLPGSKRGDPSARRK. One copy of the WD 14 repeat lies at 669–709; sequence NPEVRVNGVAFSPNGSAFCAASTEGLLIYSLDTTIQFDPFD. The tract at residues 866–899 is disordered; sequence TGSDEQPGAGGMSLNDVMQQDEGNASEDEWIGLV. A compositionally biased stretch (acidic residues) spans 889–899; that stretch reads NASEDEWIGLV.

It belongs to the WD repeat PWP2 family.

The protein is Periodic tryptophan protein 2 homolog of Neurospora crassa (strain ATCC 24698 / 74-OR23-1A / CBS 708.71 / DSM 1257 / FGSC 987).